A 323-amino-acid chain; its full sequence is Cyclin-H (323 aa).

S5 bears the Phosphoserine; by CDK8 mark. At S132 the chain carries Phosphoserine. Positions K295–L323 are disordered. Position 304 is a phosphoserine; by CDK8 (S304). Residues E310 to L323 are compositionally biased toward acidic residues. At T315 the chain carries Phosphothreonine. S322 carries the phosphoserine modification.

The protein belongs to the cyclin family. Cyclin C subfamily. As to quaternary structure, associates primarily with CDK7 and MAT1 to form the CAK complex. CAK can further associate with the core-TFIIH to form the TFIIH basal transcription factor. Expressed in both the germinal and somatic cells of the testis.

The protein localises to the nucleus. Functionally, regulates CDK7, the catalytic subunit of the CDK-activating kinase (CAK) enzymatic complex. CAK activates the cyclin-associated kinases CDK1, CDK2, CDK4 and CDK6 by threonine phosphorylation. CAK complexed to the core-TFIIH basal transcription factor activates RNA polymerase II by serine phosphorylation of the repetitive C-terminal domain (CTD) of its large subunit (POLR2A), allowing its escape from the promoter and elongation of the transcripts. Involved in cell cycle control and in RNA transcription by RNA polymerase II. Its expression and activity are constant throughout the cell cycle. This is Cyclin-H (Ccnh) from Mus musculus (Mouse).